The sequence spans 234 residues: Sugar fermentation stimulation protein A (234 aa).

Residues 201 to 220 (LLSEAQQRGVEILAYKAEIS) constitute a DNA-binding region (H-T-H motif).

It belongs to the SfsA family.

In terms of biological role, binds to DNA non-specifically. Could be a regulatory factor involved in maltose metabolism. The chain is Sugar fermentation stimulation protein A from Escherichia coli (strain 55989 / EAEC).